We begin with the raw amino-acid sequence, 1032 residues long: Kinesin heavy chain isoform 5A (1032 aa).

Position 2 is an N-acetylalanine (alanine 2). In terms of domain architecture, Kinesin motor spans 9-327 (SIKVLCRFRP…LMFGQRAKTI (319 aa)). 86–93 (GQTSSGKT) is a binding site for ATP. Residues 174 to 315 (VSGPEEILDV…PSSYNDAETK (142 aa)) are microtubule-binding. Positions 271–361 (EGTKSYVPYR…KTKAQKETIA (91 aa)) are necessary for interaction with ZFYVE27. A coiled-coil region spans residues 331-906 (ASVNLELTAE…VDRIKEAVRY (576 aa)). The interaction with BICD2 stretch occupies residues 353 to 1032 (TKAQKETIAK…FPLHQETAAS (680 aa)). Threonine 397 bears the Phosphothreonine mark. Residues 904–939 (VRYKSSGKRGHSAQIAKPVRPGHYPASSPTNPYGTR) form a disordered region. A globular region spans residues 907 to 1032 (KSSGKRGHSA…FPLHQETAAS (126 aa)).

The protein belongs to the TRAFAC class myosin-kinesin ATPase superfamily. Kinesin family. Kinesin subfamily. In terms of assembly, oligomer composed of two heavy chains and two light chains. Interacts with GRIP1. Interacts with FMR1 (via C-terminus); this interaction is increased in a mGluR-dependent manner. Interacts with BORCS5. Interacts with ZFYVE27. Interacts with VAPA, VAPB, SURF4, RAB11A (GDP-bound form), RAB11B (GDP-bound form) and RTN3 in a ZFYVE27-dependent manner. Interacts with BICD2. Interacts with DTNB.

The protein localises to the cytoplasm. The protein resides in the perinuclear region. It localises to the cytoskeleton. It is found in the perikaryon. It catalyses the reaction ATP + H2O + a kinesin associated with a microtubule at position (n) = ADP + phosphate a kinesin associated with a microtubule at position (n+1, toward the plus end).. In terms of biological role, microtubule-dependent motor required for slow axonal transport of neurofilament proteins (NFH, NFM and NFL). Can induce formation of neurite-like membrane protrusions in non-neuronal cells in a ZFYVE27-dependent manner. The ZFYVE27-KIF5A complex contributes to the vesicular transport of VAPA, VAPB, SURF4, RAB11A, RAB11B and RTN3 proteins in neurons. Required for anterograde axonal transportation of MAPK8IP3/JIP3 which is essential for MAPK8IP3/JIP3 function in axon elongation. The polypeptide is Kinesin heavy chain isoform 5A (KIF5A) (Pongo abelii (Sumatran orangutan)).